The primary structure comprises 655 residues: p-hydroxybenzoic acid efflux pump subunit AaeB (655 aa).

At 1–12 (MGIFSIANQHIR) the chain is on the periplasmic side. A helical membrane pass occupies residues 13-33 (FAVKLATAIVLALFVGFHFQL). Topologically, residues 34 to 37 (ETPR) are cytoplasmic. A helical transmembrane segment spans residues 38–58 (WAVLTAAIVAAGPAFAAGGEP). The Periplasmic portion of the chain corresponds to 59–68 (YSGAIRYRGF). Residues 69–89 (LRIIGTFIGCIAGLVIIIAMI) traverse the membrane as a helical segment. The Cytoplasmic portion of the chain corresponds to 90-92 (RAP). A helical membrane pass occupies residues 93–113 (LLMILVCCIWAGFCTWISSLV). The Periplasmic portion of the chain corresponds to 114 to 120 (RIENSYA). Residues 121-141 (WGLAGYTALIIVITIQPEPLL) form a helical membrane-spanning segment. The Cytoplasmic portion of the chain corresponds to 142 to 151 (TPQFAVERCS). The chain crosses the membrane as a helical span at residues 152–172 (EIVIGIVCAIMADLLFSPRSI). Residues 173-369 (KQEVDRELES…RTTLSCILGT (197 aa)) lie on the Periplasmic side of the membrane. The helical transmembrane segment at 370-390 (LFWLWTGWTSGSGAMVMIAVV) threads the bilayer. Residues 391–406 (TSLAMRLPNPRMVAID) are Cytoplasmic-facing. A helical membrane pass occupies residues 407-427 (FIYGTLAALPLGLLYFLVIIP). The Periplasmic portion of the chain corresponds to 428-430 (NTQ). A helical transmembrane segment spans residues 431 to 451 (QSMLLLCISLAVLGFFLGIEV). At 452-458 (QKRRLGS) the chain is on the cytoplasmic side. Residues 459-479 (MGALASTINIIVLDNPMTFHF) form a helical membrane-spanning segment. The Periplasmic segment spans residues 480-481 (SQ). A helical membrane pass occupies residues 482–502 (FLDSALGQIVGCVLAFTVILL). Residues 503-655 (VRDKSRDRTG…HKYQHALTDS (153 aa)) lie on the Cytoplasmic side of the membrane.

The protein belongs to the aromatic acid exporter ArAE (TC 2.A.85) family.

The protein localises to the cell inner membrane. In terms of biological role, forms an efflux pump with AaeA. Could function as a metabolic relief valve, allowing to eliminate certain compounds when they accumulate to high levels in the cell. This chain is p-hydroxybenzoic acid efflux pump subunit AaeB, found in Shigella flexneri.